The sequence spans 200 residues: Translation machinery-associated protein 22 (200 aa).

Positions valine 95–leucine 166 constitute an SUI1 domain.

It belongs to the DENR family. Interacts with the 40S ribosomal subunit.

Its subcellular location is the cytoplasm. This is Translation machinery-associated protein 22 (TMA22) from Kluyveromyces lactis (strain ATCC 8585 / CBS 2359 / DSM 70799 / NBRC 1267 / NRRL Y-1140 / WM37) (Yeast).